A 553-amino-acid chain; its full sequence is Arginine--tRNA ligase (553 aa).

The short motif at 123 to 133 is the 'HIGH' region element; it reads ANPTGPLTIGR.

This sequence belongs to the class-I aminoacyl-tRNA synthetase family. Monomer.

Its subcellular location is the cytoplasm. The enzyme catalyses tRNA(Arg) + L-arginine + ATP = L-arginyl-tRNA(Arg) + AMP + diphosphate. In Chlorobium phaeobacteroides (strain BS1), this protein is Arginine--tRNA ligase.